Here is a 120-residue protein sequence, read N- to C-terminus: MSRLTLPKNARLLKRKQFVYVQRNGRCCRADQVTLRVVPSRHSNTRKVGITVSKKFGKAHQRNRFKRIVREAFRHVRPNLPGCQAVISPRGNSQPDFLKLSEELLQRIPEALPLASSSRC.

The protein belongs to the RnpA family. In terms of assembly, consists of a catalytic RNA component (M1 or rnpB) and a protein subunit.

It catalyses the reaction Endonucleolytic cleavage of RNA, removing 5'-extranucleotides from tRNA precursor.. RNaseP catalyzes the removal of the 5'-leader sequence from pre-tRNA to produce the mature 5'-terminus. It can also cleave other RNA substrates such as 4.5S RNA. The protein component plays an auxiliary but essential role in vivo by binding to the 5'-leader sequence and broadening the substrate specificity of the ribozyme. This chain is Ribonuclease P protein component, found in Chlamydia trachomatis serovar A (strain ATCC VR-571B / DSM 19440 / HAR-13).